The chain runs to 129 residues: Small ribosomal subunit protein uS12 (129 aa).

Asp-89 carries the post-translational modification 3-methylthioaspartic acid. Residues 110-129 (RKQGRSRYGAPRKQVVATKK) are disordered.

The protein belongs to the universal ribosomal protein uS12 family. As to quaternary structure, part of the 30S ribosomal subunit. Contacts proteins S8 and S17. May interact with IF1 in the 30S initiation complex.

Functionally, with S4 and S5 plays an important role in translational accuracy. Interacts with and stabilizes bases of the 16S rRNA that are involved in tRNA selection in the A site and with the mRNA backbone. Located at the interface of the 30S and 50S subunits, it traverses the body of the 30S subunit contacting proteins on the other side and probably holding the rRNA structure together. The combined cluster of proteins S8, S12 and S17 appears to hold together the shoulder and platform of the 30S subunit. This chain is Small ribosomal subunit protein uS12, found in Rickettsia bellii (strain RML369-C).